Reading from the N-terminus, the 502-residue chain is MNAEPPEEKAASEAEAGAMPEKRAGSRAAGGNSLQGFGRPSVYHAAIVIFLEFFAWGLLTTSMLTVLHETFPQHTFLMNGLIQGVKGLLSFLSAPLIGALSDVWGRKPFLLGTVFFTCFPIPLMRISPWWYFAMISISGVFSVTFSVIFAYVADVTQEHERSTAYGWVSATFAASLVSSPAIGAYLSASYGDSLVVLVATVVALLDICFILLAVPESLPEKMRPLSWGARISWKQADPFASLKKVGKDSTILLICITVFLSYLPEAGQYSSFFLYLRQVIGFGSIKIAAFIAMVGILSIVAQTVFLTSLMRSLGNKNTVLLGLGFQMFQLAWYGFGSQAWMMWAAGIVAAVSSITFPAVSTLVSQNADSNQQGVAQGIITGIRGLCNGLGPALYGFIFYMFHVELTELEPELISNNAALQGAVIPGPPFLFGACIVFMSFLVAVFIPEYSKGGIQKHSNSISGSLANTPERGSDEDIEPLLQDSSIWELSSLEEPGHQCTEL.

Basic and acidic residues predominate over residues 1–12; it reads MNAEPPEEKAAS. Residues 1 to 27 form a disordered region; the sequence is MNAEPPEEKAASEAEAGAMPEKRAGSR. The Extracellular segment spans residues 1–46; that stretch reads MNAEPPEEKAASEAEAGAMPEKRAGSRAAGGNSLQGFGRPSVYHAA. Residues 47-67 traverse the membrane as a helical segment; sequence IVIFLEFFAWGLLTTSMLTVL. Over 68–79 the chain is Cytoplasmic; that stretch reads HETFPQHTFLMN. Residues 80-100 form a helical membrane-spanning segment; the sequence is GLIQGVKGLLSFLSAPLIGAL. Topologically, residues 101–108 are extracellular; sequence SDVWGRKP. Residues 109 to 129 traverse the membrane as a helical segment; that stretch reads FLLGTVFFTCFPIPLMRISPW. Residues 130–131 are Cytoplasmic-facing; sequence WY. A helical membrane pass occupies residues 132 to 152; that stretch reads FAMISISGVFSVTFSVIFAYV. Topologically, residues 153-165 are extracellular; sequence ADVTQEHERSTAY. Residues 166-186 form a helical membrane-spanning segment; it reads GWVSATFAASLVSSPAIGAYL. The Cytoplasmic segment spans residues 187 to 193; sequence SASYGDS. A helical transmembrane segment spans residues 194–214; the sequence is LVVLVATVVALLDICFILLAV. Topologically, residues 215-248 are extracellular; sequence PESLPEKMRPLSWGARISWKQADPFASLKKVGKD. The chain crosses the membrane as a helical span at residues 249 to 269; the sequence is STILLICITVFLSYLPEAGQY. Residues 270–278 lie on the Cytoplasmic side of the membrane; it reads SSFFLYLRQ. Residues 279–299 traverse the membrane as a helical segment; it reads VIGFGSIKIAAFIAMVGILSI. Residues 300-316 are Extracellular-facing; it reads VAQTVFLTSLMRSLGNK. A helical membrane pass occupies residues 317–337; that stretch reads NTVLLGLGFQMFQLAWYGFGS. A topological domain (cytoplasmic) is located at residue Q338. A helical transmembrane segment spans residues 339–359; the sequence is AWMMWAAGIVAAVSSITFPAV. The Extracellular portion of the chain corresponds to 360–384; that stretch reads STLVSQNADSNQQGVAQGIITGIRG. Residues 385-405 form a helical membrane-spanning segment; sequence LCNGLGPALYGFIFYMFHVEL. At 406-425 the chain is on the cytoplasmic side; sequence TELEPELISNNAALQGAVIP. Residues 426-446 traverse the membrane as a helical segment; that stretch reads GPPFLFGACIVFMSFLVAVFI. Residues 447–502 are Extracellular-facing; sequence PEYSKGGIQKHSNSISGSLANTPERGSDEDIEPLLQDSSIWELSSLEEPGHQCTEL.

It belongs to the major facilitator superfamily.

The protein resides in the membrane. This Bos taurus (Bovine) protein is Hippocampus abundant transcript-like protein 1.